We begin with the raw amino-acid sequence, 109 residues long: Putative double-stranded DNA mimic protein YciU (109 aa).

Belongs to the putative dsDNA mimic protein family.

Functionally, may act as a double-stranded DNA (dsDNA) mimic. Probably regulates the activity of a dsDNA-binding protein. The chain is Putative double-stranded DNA mimic protein YciU from Shigella flexneri.